Consider the following 131-residue polypeptide: Urease subunit beta (131 aa).

The tract at residues 100–131 is disordered; it reads PLDPAAGVTSDEDAASAVVPRGAETSEREARA.

It belongs to the urease beta subunit family. Heterotrimer of UreA (gamma), UreB (beta) and UreC (alpha) subunits. Three heterotrimers associate to form the active enzyme.

Its subcellular location is the cytoplasm. It carries out the reaction urea + 2 H2O + H(+) = hydrogencarbonate + 2 NH4(+). The protein operates within nitrogen metabolism; urea degradation; CO(2) and NH(3) from urea (urease route): step 1/1. This Kocuria rhizophila (strain ATCC 9341 / DSM 348 / NBRC 103217 / DC2201) protein is Urease subunit beta.